We begin with the raw amino-acid sequence, 199 residues long: ATP-dependent Clp protease proteolytic subunit (199 aa).

Serine 102 serves as the catalytic Nucleophile. The active site involves histidine 127.

This sequence belongs to the peptidase S14 family. Fourteen ClpP subunits assemble into 2 heptameric rings which stack back to back to give a disk-like structure with a central cavity, resembling the structure of eukaryotic proteasomes.

It is found in the cytoplasm. It catalyses the reaction Hydrolysis of proteins to small peptides in the presence of ATP and magnesium. alpha-casein is the usual test substrate. In the absence of ATP, only oligopeptides shorter than five residues are hydrolyzed (such as succinyl-Leu-Tyr-|-NHMec, and Leu-Tyr-Leu-|-Tyr-Trp, in which cleavage of the -Tyr-|-Leu- and -Tyr-|-Trp bonds also occurs).. In terms of biological role, cleaves peptides in various proteins in a process that requires ATP hydrolysis. Has a chymotrypsin-like activity. Plays a major role in the degradation of misfolded proteins. This chain is ATP-dependent Clp protease proteolytic subunit, found in Pseudothermotoga lettingae (strain ATCC BAA-301 / DSM 14385 / NBRC 107922 / TMO) (Thermotoga lettingae).